The primary structure comprises 65 residues: Large ribosomal subunit protein bL35 (65 aa).

The protein belongs to the bacterial ribosomal protein bL35 family.

This Thermotoga neapolitana (strain ATCC 49049 / DSM 4359 / NBRC 107923 / NS-E) protein is Large ribosomal subunit protein bL35.